Reading from the N-terminus, the 808-residue chain is Envelope glycoprotein B (808 aa).

The signal sequence occupies residues 1 to 19 (MVPNKHLLLIILSFSTACG). Over 20–701 (QTTPTTAVEK…TGILNFIKNP (682 aa)) the chain is Virion surface. The N-linked (GlcNAc...) asparagine; by host glycan is linked to Asn-30. 5 cysteine pairs are disulfide-bonded: Cys-45–Cys-498, Cys-62–Cys-454, Cys-136–Cys-201, Cys-291–Cys-338, and Cys-520–Cys-557. The tract at residues 101–107 (IFNGWTR) is involved in fusion and/or binding to host membrane. Residue Asn-158 is glycosylated (N-linked (GlcNAc...) asparagine; by host). The tract at residues 187–195 (GWLWGTYRT) is involved in fusion and/or binding to host membrane. N-linked (GlcNAc...) asparagine; by host glycosylation is found at Asn-239, Asn-251, Asn-285, Asn-331, Asn-344, Asn-355, Asn-361, Asn-532, Asn-569, Asn-587, and Asn-598. Hydrophobic membrane proximal region stretches follow at residues 647–699 (FDNS…NFIK) and 658–698 (IIQD…LNFI). The helical transmembrane segment at 702 to 722 (LGGMFTFLLIGAVIILVILLV) threads the bilayer. The Intravirion segment spans residues 723 to 808 (RRTNNMSQAP…KQISTEDKIV (86 aa)).

It belongs to the herpesviridae glycoprotein B family. Homotrimer; disulfide-linked. Binds to heparan sulfate proteoglycans. Interacts with gH/gL heterodimer. In terms of processing, a proteolytic cleavage by host furin generates two subunits that remain linked by disulfide bonds.

The protein resides in the virion membrane. The protein localises to the host cell membrane. It is found in the host endosome membrane. Its subcellular location is the host Golgi apparatus membrane. Functionally, envelope glycoprotein that forms spikes at the surface of virion envelope. Essential for the initial attachment to heparan sulfate moieties of the host cell surface proteoglycans. Involved in fusion of viral and cellular membranes leading to virus entry into the host cell. Following initial binding to its host receptors, membrane fusion is mediated by the fusion machinery composed at least of gB and the heterodimer gH/gL. May be involved in the fusion between the virion envelope and the outer nuclear membrane during virion egress. The protein is Envelope glycoprotein B of Saimiriine herpesvirus 2 (strain 11) (SaHV-2).